The chain runs to 813 residues: Leucine--tRNA ligase (813 aa).

The 'HIGH' region motif lies at P39 to H49. Positions K582–S586 match the 'KMSKS' region motif. K585 lines the ATP pocket.

This sequence belongs to the class-I aminoacyl-tRNA synthetase family.

It localises to the cytoplasm. It carries out the reaction tRNA(Leu) + L-leucine + ATP = L-leucyl-tRNA(Leu) + AMP + diphosphate. This chain is Leucine--tRNA ligase, found in Campylobacter hominis (strain ATCC BAA-381 / DSM 21671 / CCUG 45161 / LMG 19568 / NCTC 13146 / CH001A).